The primary structure comprises 657 residues: Conserved oligomeric Golgi complex subunit 6 (657 aa).

The protein belongs to the COG6 family. As to quaternary structure, component of the conserved oligomeric Golgi complex which is composed of eight different subunits and is required for normal Golgi morphology and localization.

It is found in the golgi apparatus membrane. Required for normal Golgi function. This Homo sapiens (Human) protein is Conserved oligomeric Golgi complex subunit 6 (COG6).